Here is a 493-residue protein sequence, read N- to C-terminus: Galactose-1-phosphate uridylyltransferase (493 aa).

Belongs to the galactose-1-phosphate uridylyltransferase type 2 family.

Its subcellular location is the cytoplasm. The enzyme catalyses alpha-D-galactose 1-phosphate + UDP-alpha-D-glucose = alpha-D-glucose 1-phosphate + UDP-alpha-D-galactose. The protein operates within carbohydrate metabolism; galactose metabolism. In Lactococcus lactis subsp. lactis (strain IL1403) (Streptococcus lactis), this protein is Galactose-1-phosphate uridylyltransferase (galT).